A 451-amino-acid polypeptide reads, in one-letter code: Trigger factor (451 aa).

The region spanning 173 to 258 is the PPIase FKBP-type domain; sequence GDRVTVDFVG…LKKVEWAHLP (86 aa).

This sequence belongs to the FKBP-type PPIase family. Tig subfamily.

It is found in the cytoplasm. The catalysed reaction is [protein]-peptidylproline (omega=180) = [protein]-peptidylproline (omega=0). Involved in protein export. Acts as a chaperone by maintaining the newly synthesized protein in an open conformation. Functions as a peptidyl-prolyl cis-trans isomerase. The sequence is that of Trigger factor from Cupriavidus taiwanensis (strain DSM 17343 / BCRC 17206 / CCUG 44338 / CIP 107171 / LMG 19424 / R1) (Ralstonia taiwanensis (strain LMG 19424)).